A 323-amino-acid chain; its full sequence is GILT-like protein C02D5.2 (323 aa).

Residues 13–32 (LICRPILTFSSLHILTAFLI) form a helical membrane-spanning segment. N-linked (GlcNAc...) asparagine glycosylation occurs at N35. The next 2 membrane-spanning stretches (helical) occupy residues 37 to 59 (SYIN…HRFL) and 87 to 104 (YIYG…YRSL). N-linked (GlcNAc...) asparagine glycosylation occurs at N289.

It belongs to the GILT family.

The protein resides in the membrane. The sequence is that of GILT-like protein C02D5.2 from Caenorhabditis elegans.